Reading from the N-terminus, the 491-residue chain is Protein nucleotidyltransferase YdiU (491 aa).

The ATP site is built by G88, G90, R91, K111, D123, G124, R174, and R181. D250 (proton acceptor) is an active-site residue. Mg(2+) is bound by residues N251 and D260. Residue D260 coordinates ATP.

This sequence belongs to the SELO family. Mg(2+) is required as a cofactor. Mn(2+) serves as cofactor.

The catalysed reaction is L-seryl-[protein] + ATP = 3-O-(5'-adenylyl)-L-seryl-[protein] + diphosphate. It carries out the reaction L-threonyl-[protein] + ATP = 3-O-(5'-adenylyl)-L-threonyl-[protein] + diphosphate. The enzyme catalyses L-tyrosyl-[protein] + ATP = O-(5'-adenylyl)-L-tyrosyl-[protein] + diphosphate. It catalyses the reaction L-histidyl-[protein] + UTP = N(tele)-(5'-uridylyl)-L-histidyl-[protein] + diphosphate. The catalysed reaction is L-seryl-[protein] + UTP = O-(5'-uridylyl)-L-seryl-[protein] + diphosphate. It carries out the reaction L-tyrosyl-[protein] + UTP = O-(5'-uridylyl)-L-tyrosyl-[protein] + diphosphate. Functionally, nucleotidyltransferase involved in the post-translational modification of proteins. It can catalyze the addition of adenosine monophosphate (AMP) or uridine monophosphate (UMP) to a protein, resulting in modifications known as AMPylation and UMPylation. In Bradyrhizobium sp. (strain BTAi1 / ATCC BAA-1182), this protein is Protein nucleotidyltransferase YdiU.